Here is a 208-residue protein sequence, read N- to C-terminus: Putative 3-methyladenine DNA glycosylase (208 aa).

The segment at 1–20 is disordered; that stretch reads MGRAHTVSRGEDHPPIARSE.

The protein belongs to the DNA glycosylase MPG family.

The sequence is that of Putative 3-methyladenine DNA glycosylase from Mesorhizobium japonicum (strain LMG 29417 / CECT 9101 / MAFF 303099) (Mesorhizobium loti (strain MAFF 303099)).